The chain runs to 156 residues: Movement protein P17 (156 aa).

The homodimerization stretch occupies residues 38–54 (AEDVEEEAIAAQEELEF). The interval 57–156 (DEAQARHSCL…RAAPKLIKRG (100 aa)) is RNA-binding. 4 positions are modified to phosphoserine: S71, S79, S137, and S140. Residues 106 to 156 (ASYFSSSARPLPPPPAPSLMSWTPIAKYHPSSPTSTSSKLRRAAPKLIKRG) are disordered. Residues 144 to 156 (KLRRAAPKLIKRG) are compositionally biased toward basic residues.

Belongs to the polerovirus movement protein family. In terms of assembly, homodimer. Post-translationally, expressed as a nonphosphorylated 20kDa form and a phosphorylated 22kDa form. Phosphorylated by a host PKC-related kinase. Serine phosphorylation is required for plamodesma targeting.

It is found in the host cell junction. Its subcellular location is the host plasmodesma. The protein resides in the host chloroplast envelope. It localises to the host Golgi apparatus. The protein localises to the host mitochondrion outer membrane. Together with movement protein P3a, facilitates long-distance movement of virions in host. Transports viral genome to neighboring plant cells directly through plasmosdesmata, without any budding. The movement protein allows efficient cell to cell propagation, by bypassing the host cell wall barrier. Binds ssRNA. The chain is Movement protein P17 from Solanum tuberosum (Potato).